The following is a 432-amino-acid chain: MLETHQAPDRAILLQALEPKVTRDACQRLLDELVHLSTTAGLEVHATQLLSLQKAVPATYFGSGQVEELARRIEEDEIDVAVVNHALTPIQQRNLEKKLNAKVVDRTGLILEIFAARARTREGIMQVELASLMYQQSRLVRSWTHLERQRGGVGLRGGPGERQIEVDRRLIRERIHKLKKQLEEVERTRALQRQPRQDIPLFTVALVGYTNAGKSTLFNLLTRAGVLAEDKLFATLDPTMRAVDLPDGGRILLSDTVGFIRQLPHQLVAAFKATLEEVMSADMLLHVVDLSDPEWERYVESVNGVLQELEVQHTRTLTVYNKIDRLESRGILERELARGDTIGVSAQTGEGVEPLLSELRRAVGRAMLRYEVILPVSDGRWLAKFHAEASVVEVREGEDFTTLIVELAPAVLGRLQGEVEREGVEVQFRPVD.

The Hflx-type G domain occupies 202-367 (FTVALVGYTN…ELRRAVGRAM (166 aa)). GTP is bound by residues 208-215 (GYTNAGKS), 233-237 (FATLD), 255-258 (DTVG), 321-324 (NKID), and 345-347 (SAQ). Mg(2+)-binding residues include Ser215 and Thr235.

This sequence belongs to the TRAFAC class OBG-HflX-like GTPase superfamily. HflX GTPase family. As to quaternary structure, monomer. Associates with the 50S ribosomal subunit. The cofactor is Mg(2+).

It localises to the cytoplasm. In terms of biological role, GTPase that associates with the 50S ribosomal subunit and may have a role during protein synthesis or ribosome biogenesis. This is GTPase HflX from Magnetococcus marinus (strain ATCC BAA-1437 / JCM 17883 / MC-1).